The primary structure comprises 245 residues: 1-(5-phosphoribosyl)-5-[(5-phosphoribosylamino)methylideneamino] imidazole-4-carboxamide isomerase (245 aa).

Aspartate 11 functions as the Proton acceptor in the catalytic mechanism. Aspartate 132 functions as the Proton donor in the catalytic mechanism.

The protein belongs to the HisA/HisF family.

It localises to the cytoplasm. The catalysed reaction is 1-(5-phospho-beta-D-ribosyl)-5-[(5-phospho-beta-D-ribosylamino)methylideneamino]imidazole-4-carboxamide = 5-[(5-phospho-1-deoxy-D-ribulos-1-ylimino)methylamino]-1-(5-phospho-beta-D-ribosyl)imidazole-4-carboxamide. It functions in the pathway amino-acid biosynthesis; L-histidine biosynthesis; L-histidine from 5-phospho-alpha-D-ribose 1-diphosphate: step 4/9. The sequence is that of 1-(5-phosphoribosyl)-5-[(5-phosphoribosylamino)methylideneamino] imidazole-4-carboxamide isomerase from Bacillus pumilus (strain SAFR-032).